Reading from the N-terminus, the 78-residue chain is Small ribosomal subunit protein uS17 (78 aa).

Belongs to the universal ribosomal protein uS17 family. As to quaternary structure, part of the 30S ribosomal subunit.

One of the primary rRNA binding proteins, it binds specifically to the 5'-end of 16S ribosomal RNA. This Wolbachia pipientis wMel protein is Small ribosomal subunit protein uS17.